Here is a 177-residue protein sequence, read N- to C-terminus: Inorganic pyrophosphatase (177 aa).

Positions 31, 45, and 57 each coordinate substrate. Mg(2+)-binding residues include aspartate 67, aspartate 72, and aspartate 104. Tyrosine 142 serves as a coordination point for substrate.

This sequence belongs to the PPase family. In terms of assembly, homohexamer. Mg(2+) serves as cofactor.

The protein resides in the cytoplasm. It catalyses the reaction diphosphate + H2O = 2 phosphate + H(+). Functionally, catalyzes the hydrolysis of inorganic pyrophosphate (PPi) forming two phosphate ions. The protein is Inorganic pyrophosphatase of Neisseria meningitidis serogroup A / serotype 4A (strain DSM 15465 / Z2491).